The primary structure comprises 117 residues: Photosystem II reaction center Psb28 protein (117 aa).

Belongs to the Psb28 family. Part of the photosystem II complex.

The protein resides in the cellular thylakoid membrane. This is Photosystem II reaction center Psb28 protein from Prochlorococcus marinus (strain AS9601).